A 319-amino-acid chain; its full sequence is MTVKPKLNVLLCAPRGFCAGVVRAIDAVEEALRIYGAPVYVRHEIVHNKYVVETLKSKGAVFVEELDEVPDTSQPVIFSAHGVPKSIPVEAATRNIFAIDATCPLVTKVHREAELHHKRGRQVLLVGHAGHPEVVGTIGQLPAGSILLVQTIEDIASLQVEDEHNLSYVTQTTLSVDDTRSMVEALTRRFPDIVGPHREDICYATTNRQEAVKQVAPIVDALIVVGSSNSSNSQRLKEVAERSGCKLARLVLRAEDVEWELFANISSLAITAGASAPEILVEEIMDAFAERFDLHVEEVSTANEGVFFPLPRELRRATV.

C18 serves as a coordination point for [4Fe-4S] cluster. 2 residues coordinate (2E)-4-hydroxy-3-methylbut-2-enyl diphosphate: H47 and H81. Positions 47 and 81 each coordinate dimethylallyl diphosphate. Isopentenyl diphosphate is bound by residues H47 and H81. C103 provides a ligand contact to [4Fe-4S] cluster. H131 contributes to the (2E)-4-hydroxy-3-methylbut-2-enyl diphosphate binding site. H131 provides a ligand contact to dimethylallyl diphosphate. H131 contributes to the isopentenyl diphosphate binding site. E133 acts as the Proton donor in catalysis. T172 serves as a coordination point for (2E)-4-hydroxy-3-methylbut-2-enyl diphosphate. A [4Fe-4S] cluster-binding site is contributed by C202. The (2E)-4-hydroxy-3-methylbut-2-enyl diphosphate site is built by S230, S231, N232, and S275. Positions 230, 231, 232, and 275 each coordinate dimethylallyl diphosphate. 4 residues coordinate isopentenyl diphosphate: S230, S231, N232, and S275.

It belongs to the IspH family. Requires [4Fe-4S] cluster as cofactor.

It carries out the reaction isopentenyl diphosphate + 2 oxidized [2Fe-2S]-[ferredoxin] + H2O = (2E)-4-hydroxy-3-methylbut-2-enyl diphosphate + 2 reduced [2Fe-2S]-[ferredoxin] + 2 H(+). The catalysed reaction is dimethylallyl diphosphate + 2 oxidized [2Fe-2S]-[ferredoxin] + H2O = (2E)-4-hydroxy-3-methylbut-2-enyl diphosphate + 2 reduced [2Fe-2S]-[ferredoxin] + 2 H(+). Its pathway is isoprenoid biosynthesis; dimethylallyl diphosphate biosynthesis; dimethylallyl diphosphate from (2E)-4-hydroxy-3-methylbutenyl diphosphate: step 1/1. It participates in isoprenoid biosynthesis; isopentenyl diphosphate biosynthesis via DXP pathway; isopentenyl diphosphate from 1-deoxy-D-xylulose 5-phosphate: step 6/6. Functionally, catalyzes the conversion of 1-hydroxy-2-methyl-2-(E)-butenyl 4-diphosphate (HMBPP) into a mixture of isopentenyl diphosphate (IPP) and dimethylallyl diphosphate (DMAPP). Acts in the terminal step of the DOXP/MEP pathway for isoprenoid precursor biosynthesis. This chain is 4-hydroxy-3-methylbut-2-enyl diphosphate reductase, found in Methylocella silvestris (strain DSM 15510 / CIP 108128 / LMG 27833 / NCIMB 13906 / BL2).